A 368-amino-acid polypeptide reads, in one-letter code: Probable ubiquitin receptor RAD23a (368 aa).

Positions 1–77 (MKLTVKTLKG…GFLVVMLSKS (77 aa)) constitute a Ubiquitin-like domain. Residues 80 to 111 (ASSAGPSSTQPTSTTTSTISSTTLAAPSTTQS) show a composition bias toward low complexity. Positions 80-136 (ASSAGPSSTQPTSTTTSTISSTTLAAPSTTQSIAVPASNSTPVQEQPTAQSDTYGQA) are disordered. The span at 116–136 (ASNSTPVQEQPTAQSDTYGQA) shows a compositional bias: polar residues. In terms of domain architecture, UBA 1 spans 142–185 (SGSSIEQMVQQIMEMGGGSWDKETVTRALRAAYNNPERAVDYLY). The tract at residues 202–222 (VGSGRELTAPPPSGGPNSSPL) is disordered. In terms of domain architecture, STI1 spans 239-282 (GTLEFLRGNDQFQQLRSMVNSNPQILQPMLQELGKQNPQLLRLI). The UBA 2 domain occupies 320-360 (VTPEEQESIERLEAMGFDRAIVIEAFLSCDRNEELAANYLL).

The protein belongs to the RAD23 family. As to quaternary structure, interacts with 'Lys-48'-linked polyubiquitin chains. Interacts with RPN10. In terms of tissue distribution, widely expressed in the whole plant.

The protein localises to the nucleus. It is found in the cytoplasm. May be involved in nucleotide excision repair. Binds and presumably selects ubiquitin-conjugates for destruction. Prefers multiubiquitin chains rather than single ubiquitins, with a binding affinity for 'Lys-48'-linked ubiquitin chains. Acts as a ubiquitin receptor that associates with the 26S proteasomal docking subunit RPN10 for the indirect recognition of ubiquitinated substrates of ubiquitin/26S proteasome-mediated proteolysis (UPP). Involved in UV tolerance in roots, specifically in dark conditions. The protein is Probable ubiquitin receptor RAD23a of Arabidopsis thaliana (Mouse-ear cress).